The chain runs to 259 residues: Isoepoxydon dehydrogenase patN (259 aa).

Aspartate 69, asparagine 96, and lysine 125 together coordinate NADP(+). Residues serine 143 and serine 144 each act as proton donor in the active site. Tyrosine 158, lysine 162, and valine 191 together coordinate NADP(+). Tyrosine 158 (proton acceptor) is an active-site residue. Lysine 162 acts as the Lowers pKa of active site Tyr in catalysis.

It belongs to the short-chain dehydrogenases/reductases (SDR) family.

Its subcellular location is the cytoplasm. It localises to the cytosol. The catalysed reaction is isoepoxydon + NADP(+) = phyllostine + NADPH + H(+). It functions in the pathway mycotoxin biosynthesis; patulin biosynthesis. Functionally, isoepoxydon dehydrogenase; part of the gene cluster that mediates the biosynthesis of patulin, an acetate-derived tetraketide mycotoxin produced by several fungal species that shows antimicrobial properties against several bacteria. PatN catalyzes the conversion of isoepoxydon into phyllostine. The pathway begins with the synthesis of 6-methylsalicylic acid by the polyketide synthase (PKS) patK via condensation of acetate and malonate units. The 6-methylsalicylic acid decarboxylase patG then catalyzes the decarboxylation of 6-methylsalicylic acid to yield m-cresol (also known as 3-methylphenol). These first reactions occur in the cytosol. The intermediate m-cresol is then transported into the endoplasmic reticulum where the cytochrome P450 monooxygenase patH converts it to m-hydroxybenzyl alcohol, which is further converted to gentisyl alcohol by the cytochrome P450 monooxygenase patI. The oxidoreductases patJ and patO further convert gentisyl alcohol to isoepoxydon in the vacuole. PatN catalyzes then the transformation of isoepoxydon into phyllostine. The cluster protein patF is responsible for the conversion from phyllostine to neopatulin whereas the alcohol dehydrogenase patD converts neopatulin to E-ascladiol. The steps between isoepoxydon and E-ascladiol occur in the cytosol, and E-ascladiol is probably secreted to the extracellular space by one of the cluster-specific transporters patC or patM. Finally, the secreted patulin synthase patE catalyzes the conversion of E-ascladiol to patulin. This is Isoepoxydon dehydrogenase patN from Penicillium expansum (Blue mold rot fungus).